A 1080-amino-acid chain; its full sequence is DNA polymerase II large subunit (1080 aa).

This sequence belongs to the archaeal DNA polymerase II family. As to quaternary structure, heterodimer of a large subunit and a small subunit.

The enzyme catalyses DNA(n) + a 2'-deoxyribonucleoside 5'-triphosphate = DNA(n+1) + diphosphate. The catalysed reaction is Exonucleolytic cleavage in the 3'- to 5'-direction to yield nucleoside 5'-phosphates.. Possesses two activities: a DNA synthesis (polymerase) and an exonucleolytic activity that degrades single-stranded DNA in the 3'- to 5'-direction. Has a template-primer preference which is characteristic of a replicative DNA polymerase. The sequence is that of DNA polymerase II large subunit from Picrophilus torridus (strain ATCC 700027 / DSM 9790 / JCM 10055 / NBRC 100828 / KAW 2/3).